The primary structure comprises 85 residues: Large ribosomal subunit protein bL27 (85 aa).

Positions Met1–Arg20 are disordered.

Belongs to the bacterial ribosomal protein bL27 family.

The chain is Large ribosomal subunit protein bL27 from Haemophilus influenzae (strain PittEE).